The following is a 907-amino-acid chain: Protein translocase subunit SecA (907 aa).

ATP contacts are provided by residues Q87, 105–109 (GEGKT), and D506. The segment covering 834 to 850 (LEQQREEEAREQAEKMK) has biased composition (basic and acidic residues). A disordered region spans residues 834–907 (LEQQREEEAR…KYKQCHGKIE (74 aa)). A compositionally biased stretch (low complexity) spans 864–875 (QPQPSQQQGEQP). Zn(2+)-binding residues include C891, C893, C902, and H903. Over residues 897–907 (KKYKQCHGKIE) the composition is skewed to basic residues.

It belongs to the SecA family. As to quaternary structure, monomer and homodimer. Part of the essential Sec protein translocation apparatus which comprises SecA, SecYEG and auxiliary proteins SecDF-YajC and YidC. Requires Zn(2+) as cofactor.

Its subcellular location is the cell inner membrane. The protein localises to the cytoplasm. The catalysed reaction is ATP + H2O + cellular proteinSide 1 = ADP + phosphate + cellular proteinSide 2.. Functionally, part of the Sec protein translocase complex. Interacts with the SecYEG preprotein conducting channel. Has a central role in coupling the hydrolysis of ATP to the transfer of proteins into and across the cell membrane, serving both as a receptor for the preprotein-SecB complex and as an ATP-driven molecular motor driving the stepwise translocation of polypeptide chains across the membrane. This Alcanivorax borkumensis (strain ATCC 700651 / DSM 11573 / NCIMB 13689 / SK2) protein is Protein translocase subunit SecA.